A 657-amino-acid polypeptide reads, in one-letter code: Forkhead box protein O3 (657 aa).

Disordered regions lie at residues M1–A71 and S216–D320. The segment at residues W142–A236 is a DNA-binding region (fork-head). The segment covering T246–A257 has biased composition (basic residues). The span at D268–R283 shows a compositional bias: polar residues. The segment covering S284–S296 has biased composition (basic and acidic residues). Over residues R297–G307 the composition is skewed to polar residues.

Dephosphorylation may promote translocation to the nucleus where the protein induces transcription of target genes and triggers apoptosis. As to expression, localized to the animal hemisphere during early cleavage stages. At the late neurula, localized in the anterior neural plate, neural crest cells and in the hatching gland. As development progresses, expression becomes less localized, being observed in a variety of organs and tissues including the head, branchial arches and somites by stage 32.

It is found in the cytoplasm. The protein resides in the cytosol. Its subcellular location is the nucleus. Functionally, transcriptional activator that recognizes and binds to the DNA sequence 5'-[AG]TAAA[TC]A-3' and regulates different processes, such as apoptosis and autophagy. Acts as a positive regulator of autophagy in skeletal muscle: in starved cells, enters the nucleus following dephosphorylation and binds the promoters of autophagy genes, thereby activating their expression, resulting in proteolysis of skeletal muscle proteins. Triggers apoptosis in the absence of survival factors, including neuronal cell death upon oxidative stress. In response to metabolic stress, translocates into the mitochondria where it promotes mtDNA transcription. Also acts as a key regulator of chondrogenic commitment of skeletal progenitor cells in response to lipid availability: when lipids levels are low, translocates to the nucleus and promotes expression of sox9, which induces chondrogenic commitment and suppresses fatty acid oxidation. Also acts as a key regulator of regulatory T-cells (Treg) differentiation. The sequence is that of Forkhead box protein O3 from Xenopus laevis (African clawed frog).